Here is a 151-residue protein sequence, read N- to C-terminus: MKGLKKKRRIQIIALAFVALAGSTALIGYAMRDGINFFRSPTQVVEAPPPETEVFRIGGLVEKGSLVRGQGETVTFRVTDTNATVPVSFTGVLPDLFAEDAGMVGTGRLVGGVFEASEILAKHDETYMPKEVVDALKEQGVFQHTEDQPQG.

The Cytoplasmic portion of the chain corresponds to 1 to 9 (MKGLKKKRR). Residues 10 to 30 (IQIIALAFVALAGSTALIGYA) traverse the membrane as a helical; Signal-anchor for type II membrane protein segment. Over 31–151 (MRDGINFFRS…FQHTEDQPQG (121 aa)) the chain is Periplasmic. Heme is bound by residues H123 and Y127.

Belongs to the CcmE/CycJ family.

The protein localises to the cell inner membrane. Heme chaperone required for the biogenesis of c-type cytochromes. Transiently binds heme delivered by CcmC and transfers the heme to apo-cytochromes in a process facilitated by CcmF and CcmH. The protein is Cytochrome c-type biogenesis protein CcmE of Cereibacter sphaeroides (strain ATCC 17029 / ATH 2.4.9) (Rhodobacter sphaeroides).